The chain runs to 544 residues: Glycoprotein gp100 (544 aa).

The first 19 residues, 1-19 (MKNFILLVFLFLLVSNSLG), serve as a signal peptide directing secretion. At 20 to 489 (KSNKKDDQSP…SGGGGNKKLY (470 aa)) the chain is on the extracellular side. Asn-80 is a glycosylation site (N-linked (GlcNAc...) asparagine). Residues 84-99 (EPQNNPIPTVSINPDQ) are compositionally biased toward polar residues. Residues 84 to 215 (EPQNNPIPTV…TPTRPSSSVS (132 aa)) are disordered. Low complexity-rich tracts occupy residues 126–142 (SKPT…TIPP), 150–165 (PQTT…TPTP), and 189–199 (PKPTKSSKPTK). Residues Asn-224, Asn-308, Asn-332, Asn-366, Asn-380, Asn-410, Asn-422, and Asn-478 are each glycosylated (N-linked (GlcNAc...) asparagine). The disordered stretch occupies residues 444 to 480 (KPSTTDDDNNKNNDDGDSEIDSVGKSAVDSSKSNNNS). A helical transmembrane segment spans residues 490–510 (LLIILPTVLFIIVAALVAIFI). Residues 511-544 (KTRVSQNSGSKVNKNNNKKDSINVPFQMLDEITT) are Cytoplasmic-facing.

In terms of processing, N- and O-glycosylated.

The protein resides in the membrane. The sequence is that of Glycoprotein gp100 (gppA) from Dictyostelium discoideum (Social amoeba).